Reading from the N-terminus, the 273-residue chain is Nitrogenase iron protein (273 aa).

ATP is bound at residue 8 to 15 (GKGGIGKS). Cys-95 contacts [4Fe-4S] cluster. Arg-98 bears the ADP-ribosylarginine; by dinitrogenase reductase ADP-ribosyltransferase mark. Residue Cys-130 coordinates [4Fe-4S] cluster.

This sequence belongs to the NifH/BchL/ChlL family. In terms of assembly, homodimer. It depends on [4Fe-4S] cluster as a cofactor. The reversible ADP-ribosylation of Arg-98 inactivates the nitrogenase reductase and regulates nitrogenase activity.

It catalyses the reaction N2 + 8 reduced [2Fe-2S]-[ferredoxin] + 16 ATP + 16 H2O = H2 + 8 oxidized [2Fe-2S]-[ferredoxin] + 2 NH4(+) + 16 ADP + 16 phosphate + 6 H(+). The key enzymatic reactions in nitrogen fixation are catalyzed by the nitrogenase complex, which has 2 components: the iron protein and the molybdenum-iron protein. This is Nitrogenase iron protein from Methanosarcina mazei (strain ATCC BAA-159 / DSM 3647 / Goe1 / Go1 / JCM 11833 / OCM 88) (Methanosarcina frisia).